Here is a 327-residue protein sequence, read N- to C-terminus: uncharacterized protein (327 aa).

Transmembrane regions (helical) follow at residues 68–88 (SIPA…LFYP), 92–112 (FLHL…VDIF), 127–147 (WVAL…HLAA), and 148–168 (IAIW…YIIL).

It localises to the cell membrane. May act as a negative regulator for the transcription of mutY, fabL, sspE and yfhP. This is an uncharacterized protein from Bacillus subtilis (strain 168).